The chain runs to 322 residues: MRVVFFGTPEFALPSLQILLQPQSPFEVVGLVCQPDRPQGRGQKVLPPPTKILAQAHGIPVWQPGRLRRDPEVLAALEALAADVFVVVAYGQILPPAVLQMPKLGCINVHASLLPAYRGAAPIQWAIANGETETGVTTMLMDEGMDTGAILLQAKLPIEPEQTGLELASQLAQRGAELLVETLVKLEKGELTPIPQDDSRATYAPLLKKQDFQLDWQRPAQALHNQIRAFSPDCFTGLQGQRIKIVRSAAPQLHPPPAELPPGSPGEVVGLARGEGVYVATGEGSLLIRRAQLPGRKEQSACDLVNGGQLRVGMRFEVLPDP.

112–115 contributes to the (6S)-5,6,7,8-tetrahydrofolate binding site; it reads SLLP.

This sequence belongs to the Fmt family.

The enzyme catalyses L-methionyl-tRNA(fMet) + (6R)-10-formyltetrahydrofolate = N-formyl-L-methionyl-tRNA(fMet) + (6S)-5,6,7,8-tetrahydrofolate + H(+). Its function is as follows. Attaches a formyl group to the free amino group of methionyl-tRNA(fMet). The formyl group appears to play a dual role in the initiator identity of N-formylmethionyl-tRNA by promoting its recognition by IF2 and preventing the misappropriation of this tRNA by the elongation apparatus. This is Methionyl-tRNA formyltransferase from Synechococcus sp. (strain JA-3-3Ab) (Cyanobacteria bacterium Yellowstone A-Prime).